The primary structure comprises 330 residues: Ketol-acid reductoisomerase (NADP(+)) (330 aa).

Residues 1-181 (MNVYYEKDAD…GGTKAGVIET (181 aa)) enclose the KARI N-terminal Rossmann domain. NADP(+) contacts are provided by residues 24-27 (YGSQ), R47, S50, S52, and 82-85 (DQNQ). H107 is a catalytic residue. G133 is a binding site for NADP(+). One can recognise a KARI C-terminal knotted domain in the interval 182 to 327 (NFKNETETDL…AKLRNMMSWL (146 aa)). D190, E194, E226, and E230 together coordinate Mg(2+). Residue S251 participates in substrate binding.

Belongs to the ketol-acid reductoisomerase family. The cofactor is Mg(2+).

It carries out the reaction (2R)-2,3-dihydroxy-3-methylbutanoate + NADP(+) = (2S)-2-acetolactate + NADPH + H(+). The catalysed reaction is (2R,3R)-2,3-dihydroxy-3-methylpentanoate + NADP(+) = (S)-2-ethyl-2-hydroxy-3-oxobutanoate + NADPH + H(+). The protein operates within amino-acid biosynthesis; L-isoleucine biosynthesis; L-isoleucine from 2-oxobutanoate: step 2/4. Its pathway is amino-acid biosynthesis; L-valine biosynthesis; L-valine from pyruvate: step 2/4. Involved in the biosynthesis of branched-chain amino acids (BCAA). Catalyzes an alkyl-migration followed by a ketol-acid reduction of (S)-2-acetolactate (S2AL) to yield (R)-2,3-dihydroxy-isovalerate. In the isomerase reaction, S2AL is rearranged via a Mg-dependent methyl migration to produce 3-hydroxy-3-methyl-2-ketobutyrate (HMKB). In the reductase reaction, this 2-ketoacid undergoes a metal-dependent reduction by NADPH to yield (R)-2,3-dihydroxy-isovalerate. This is Ketol-acid reductoisomerase (NADP(+)) from Chlorobium chlorochromatii (strain CaD3).